The following is a 491-amino-acid chain: [Pyruvate dehydrogenase (acetyl-transferring)] kinase 2, mitochondrial (491 aa).

The Histidine kinase domain occupies 153-480 (PTIRTLEDAS…DVVLKLGNLM (328 aa)). Residues 300–307 (EILRNTYE), aspartate 341, 359–360 (SK), and 383–446 (DEVH…GIGL) each bind ATP.

It belongs to the PDK/BCKDK protein kinase family. In terms of assembly, interacts with PKP1.

It is found in the mitochondrion matrix. It catalyses the reaction L-seryl-[pyruvate dehydrogenase E1 alpha subunit] + ATP = O-phospho-L-seryl-[pyruvate dehydrogenase E1 alpha subunit] + ADP + H(+). In terms of biological role, inhibits the mitochondrial pyruvate dehydrogenase complex by phosphorylation of the E1 alpha subunit (PDA1), thus contributing to the regulation of glucose metabolism. This Saccharomyces cerevisiae (strain ATCC 204508 / S288c) (Baker's yeast) protein is [Pyruvate dehydrogenase (acetyl-transferring)] kinase 2, mitochondrial.